The following is a 174-amino-acid chain: Large ribosomal subunit protein bL12cz (174 aa).

The N-terminal 45 residues, 1 to 45 (MASTTFSSAFSILSLPSSSPSPPPSPPRTLPVANRRRRAAAVAST), are a transit peptide targeting the chloroplast. The segment at 1–46 (MASTTFSSAFSILSLPSSSPSPPPSPPRTLPVANRRRRAAAVASTA) is disordered. Residues 7–18 (SSAFSILSLPSS) show a composition bias toward low complexity. A compositionally biased stretch (pro residues) spans 19–29 (SPSPPPSPPRT).

The protein belongs to the bacterial ribosomal protein bL12 family.

The protein resides in the plastid. The protein localises to the chloroplast. This chain is Large ribosomal subunit protein bL12cz (RPL12-1), found in Secale cereale (Rye).